A 486-amino-acid chain; its full sequence is MSSWCSSEDAHNQSSTPSTRSRKSSWLISKIDENEIDKEVQEMMDDWRRSNEAENHVECIKAALEYCRDKLKELLIDEEDTEMDGKETKTKPINIVSNTEFPEDRDVLGNLVNCLDRQQKAARQQMYFDKIVQLGLERQALQDEAVVSTSSPLDECRAEGHEFVMQPVRGGHNPCCEVCMHTIWRLVQWWRRCRVCGMRAHDKCAEEVKRVCAGVLSTRAKFELNTNLCEERSLAEQEYQCAECTAPICFDGVAEQEARLCDYSGELFCPNCHWNDVWSIPARIVHNLDSTPRPVCRAVKQLLAIIDHRPLIDINESTLSLIKFHKELRRVNELRRNFLLMKCYFVSCRTARRLRILQYLNAHSHFVDNSVMYSPKELRELCDGTLLPDLEQIHTVFRKHIEEECETCAGNGFFCELCDDINVDQKNKILYPFTENTRSCATCLAVYHKKCFERKSLNCPRCERRRKRTEIPKTLSSSDEKEAVRN.

The disordered stretch occupies residues Met1–Trp26. Phorbol-ester/DAG-type zinc fingers lie at residues Gly160–Cys212 and Ile393–Cys459.

Belongs to the DEF8 family.

The sequence is that of Differentially expressed in FDCP 8 homolog from Caenorhabditis elegans.